The primary structure comprises 285 residues: 4-hydroxybenzoate octaprenyltransferase (285 aa).

7 helical membrane passes run 20–37 (IGIYLVLWPALWALWLAA), 96–116 (FFFVLCLLAFGLVLFLNPFTI), 138–158 (WPQAFLGAAFAWAIPMAFAAI), 166–186 (AWVIFGVTLVWALVYDTAYAV), 211–231 (IIGFFQAIMLLGFLWIGDLFG), 234–254 (WLYYGSVLIAAGFFVYHQYLL), and 262–282 (AFKAFLNNHWVGLVILIGIML).

It belongs to the UbiA prenyltransferase family. The cofactor is Mg(2+).

The protein localises to the cell inner membrane. It carries out the reaction all-trans-octaprenyl diphosphate + 4-hydroxybenzoate = 4-hydroxy-3-(all-trans-octaprenyl)benzoate + diphosphate. The protein operates within cofactor biosynthesis; ubiquinone biosynthesis. In terms of biological role, catalyzes the prenylation of para-hydroxybenzoate (PHB) with an all-trans polyprenyl group. Mediates the second step in the final reaction sequence of ubiquinone-8 (UQ-8) biosynthesis, which is the condensation of the polyisoprenoid side chain with PHB, generating the first membrane-bound Q intermediate 3-octaprenyl-4-hydroxybenzoate. The chain is 4-hydroxybenzoate octaprenyltransferase from Hydrogenovibrio crunogenus (strain DSM 25203 / XCL-2) (Thiomicrospira crunogena).